The sequence spans 337 residues: Deoxyhypusine hydroxylase (337 aa).

HEAT-like PBS-type repeat units follow at residues leucine 73–aspartate 99 and cysteine 106–arginine 132. Residues histidine 75, glutamate 76, histidine 108, and glutamate 109 each coordinate Fe cation. Over residues alanine 156–proline 165 the composition is skewed to basic and acidic residues. The tract at residues alanine 156–glutamate 183 is disordered. 3 HEAT-like PBS-type repeats span residues serine 202–aspartate 235, phenylalanine 240–asparagine 266, and valine 273–aspartate 300. The Fe cation site is built by histidine 242, glutamate 243, histidine 275, and glutamate 276.

Belongs to the deoxyhypusine hydroxylase family. Requires Fe(2+) as cofactor.

It localises to the cytoplasm. The protein localises to the nucleus. It catalyses the reaction [eIF5A protein]-deoxyhypusine + AH2 + O2 = [eIF5A protein]-hypusine + A + H2O. It participates in protein modification; eIF5A hypusination. Catalyzes the hydroxylation of the N(6)-(4-aminobutyl)-L-lysine intermediate to form hypusine, an essential post-translational modification only found in mature eIF-5A factor. In Gibberella zeae (strain ATCC MYA-4620 / CBS 123657 / FGSC 9075 / NRRL 31084 / PH-1) (Wheat head blight fungus), this protein is Deoxyhypusine hydroxylase.